The primary structure comprises 557 residues: Dihydroxy-acid dehydratase (557 aa).

D78 contributes to the Mg(2+) binding site. C119 serves as a coordination point for [2Fe-2S] cluster. Mg(2+) contacts are provided by D120 and K121. K121 carries the post-translational modification N6-carboxylysine. Position 192 (C192) interacts with [2Fe-2S] cluster. E442 serves as a coordination point for Mg(2+). The active-site Proton acceptor is the S468.

This sequence belongs to the IlvD/Edd family. Homodimer. The cofactor is [2Fe-2S] cluster. Requires Mg(2+) as cofactor.

It carries out the reaction (2R)-2,3-dihydroxy-3-methylbutanoate = 3-methyl-2-oxobutanoate + H2O. The enzyme catalyses (2R,3R)-2,3-dihydroxy-3-methylpentanoate = (S)-3-methyl-2-oxopentanoate + H2O. It functions in the pathway amino-acid biosynthesis; L-isoleucine biosynthesis; L-isoleucine from 2-oxobutanoate: step 3/4. The protein operates within amino-acid biosynthesis; L-valine biosynthesis; L-valine from pyruvate: step 3/4. Its function is as follows. Functions in the biosynthesis of branched-chain amino acids. Catalyzes the dehydration of (2R,3R)-2,3-dihydroxy-3-methylpentanoate (2,3-dihydroxy-3-methylvalerate) into 2-oxo-3-methylpentanoate (2-oxo-3-methylvalerate) and of (2R)-2,3-dihydroxy-3-methylbutanoate (2,3-dihydroxyisovalerate) into 2-oxo-3-methylbutanoate (2-oxoisovalerate), the penultimate precursor to L-isoleucine and L-valine, respectively. The chain is Dihydroxy-acid dehydratase from Bacillus cytotoxicus (strain DSM 22905 / CIP 110041 / 391-98 / NVH 391-98).